We begin with the raw amino-acid sequence, 298 residues long: MKSPFSRFFGGGSKTEPIVKNEVEQAEAVHTAEEVIKLPIDQIVPNRFQPRTIFDDEKIEELSRTIHTHGVIQPIVVRKTSENQYEIIAGERRYRAMKKLQWTEVPAIVRNLTDKETASIALIENLQREELTAIEEAVAYQKLLELHELTQEALAQRLGKGQSTVANKLRLLRLPDEVQQAILQRKISERHARALIAIKDQPLQLEVLQQTVDNDWNVRQLEEQIQAILHPVTDEQESVPKKAKPKRKAISKDVRIALNTIKQSLTMVTKSGITVKTEEEDTEEYYQITVKIPKKKKV.

The H-T-H motif DNA-binding region spans 152–171; it reads EALAQRLGKGQSTVANKLRL.

Belongs to the ParB family.

The protein resides in the cytoplasm. It is found in the nucleoid. Its function is as follows. Effects nucleoid occlusion by binding relatively nonspecifically to DNA and preventing the assembly of the division machinery in the vicinity of the nucleoid, especially under conditions that disturb the cell cycle. It helps to coordinate cell division and chromosome segregation by preventing the formation of the Z ring through the nucleoid, which would cause chromosome breakage. This Lysinibacillus sphaericus (strain C3-41) protein is Nucleoid occlusion protein.